The chain runs to 175 residues: Putative transmembrane protein ORF175 (175 aa).

4 helical membrane-spanning segments follow: residues 14–34 (LGIV…GSFM), 58–78 (VLSN…AIAF), 101–121 (IVVA…FALF), and 142–162 (ITPF…VLSI).

The protein resides in the host membrane. In Acidianus two-tailed virus (ATV), this protein is Putative transmembrane protein ORF175.